The chain runs to 136 residues: Acyl carrier protein 2, chloroplastic (136 aa).

Residues 1-51 (MASIAASASISLQARPRQLAIAASQVKSFSNGRRSSLSFNLRQLPTRLTVS) constitute a chloroplast transit peptide. In terms of domain architecture, Carrier spans 56–131 (PETVDKVCAV…QAAALIEELL (76 aa)). Serine 91 bears the O-(pantetheine 4'-phosphoryl)serine mark.

The protein belongs to the acyl carrier protein (ACP) family. In terms of processing, 4'-phosphopantetheine is transferred from CoA to a specific serine of apo-ACP by acpS. This modification is essential for activity because fatty acids are bound in thioester linkage to the sulfhydryl of the prosthetic group.

It is found in the plastid. Its subcellular location is the chloroplast. Its function is as follows. Carrier of the growing fatty acid chain in fatty acid biosynthesis. The chain is Acyl carrier protein 2, chloroplastic (ACP2) from Arabidopsis thaliana (Mouse-ear cress).